The chain runs to 578 residues: XK-related protein 6 (578 aa).

The next 7 membrane-spanning stretches (helical) occupy residues 86 to 106 (WIVL…WLAV), 114 to 134 (FLWS…VQIL), 253 to 273 (WLQC…LASY), 307 to 327 (VLSL…FVVL), 348 to 368 (WEEV…WFNV), 377 to 397 (MVAY…LWYA), and 410 to 430 (LALC…VLYY).

Belongs to the XK family.

The protein localises to the cell membrane. This Tetraodon nigroviridis (Spotted green pufferfish) protein is XK-related protein 6 (xkr6).